We begin with the raw amino-acid sequence, 67 residues long: Small ribosomal subunit protein bS21 (67 aa).

The protein belongs to the bacterial ribosomal protein bS21 family.

The polypeptide is Small ribosomal subunit protein bS21 (Paramagnetospirillum magneticum (strain ATCC 700264 / AMB-1) (Magnetospirillum magneticum)).